Consider the following 375-residue polypeptide: Succinyl-diaminopimelate desuccinylase (375 aa).

His-66 serves as a coordination point for Zn(2+). Asp-68 is an active-site residue. Asp-99 serves as a coordination point for Zn(2+). Catalysis depends on Glu-133, which acts as the Proton acceptor. Residues Glu-134, Glu-162, and His-348 each coordinate Zn(2+).

It belongs to the peptidase M20A family. DapE subfamily. In terms of assembly, homodimer. Requires Zn(2+) as cofactor. Co(2+) serves as cofactor.

The catalysed reaction is N-succinyl-(2S,6S)-2,6-diaminopimelate + H2O = (2S,6S)-2,6-diaminopimelate + succinate. It participates in amino-acid biosynthesis; L-lysine biosynthesis via DAP pathway; LL-2,6-diaminopimelate from (S)-tetrahydrodipicolinate (succinylase route): step 3/3. Its function is as follows. Catalyzes the hydrolysis of N-succinyl-L,L-diaminopimelic acid (SDAP), forming succinate and LL-2,6-diaminopimelate (DAP), an intermediate involved in the bacterial biosynthesis of lysine and meso-diaminopimelic acid, an essential component of bacterial cell walls. This Shigella boydii serotype 18 (strain CDC 3083-94 / BS512) protein is Succinyl-diaminopimelate desuccinylase.